A 711-amino-acid chain; its full sequence is Ribosomal RNA large subunit methyltransferase K/L (711 aa).

In terms of domain architecture, THUMP spans 43 to 154 (LGYRITLWSR…RGQITIGLNF (112 aa)).

It belongs to the methyltransferase superfamily. RlmKL family.

It is found in the cytoplasm. It catalyses the reaction guanosine(2445) in 23S rRNA + S-adenosyl-L-methionine = N(2)-methylguanosine(2445) in 23S rRNA + S-adenosyl-L-homocysteine + H(+). The enzyme catalyses guanosine(2069) in 23S rRNA + S-adenosyl-L-methionine = N(2)-methylguanosine(2069) in 23S rRNA + S-adenosyl-L-homocysteine + H(+). Specifically methylates the guanine in position 2445 (m2G2445) and the guanine in position 2069 (m7G2069) of 23S rRNA. The sequence is that of Ribosomal RNA large subunit methyltransferase K/L from Shewanella woodyi (strain ATCC 51908 / MS32).